The following is a 774-amino-acid chain: Neprilysin-2 (774 aa).

Residues Met1–Ser20 are Cytoplasmic-facing. Residues Leu21 to Gly41 traverse the membrane as a helical; Signal-anchor for type II membrane protein segment. Residues Lys42 to Trp774 are Extracellular-facing. Residues Ser50–Asp79 form a disordered region. Over residues Asp60–Lys74 the composition is skewed to polar residues. The 692-residue stretch at Val83–Trp774 folds into the Peptidase M13 domain. 5 disulfides stabilise this stretch: Cys84–Cys89, Cys107–Cys759, Cys115–Cys719, Cys171–Cys424, and Cys646–Cys771. Residues Asn173, Asn239, Asn264, Asn305, Asn315, Asn358, and Asn554 are each glycosylated (N-linked (GlcNAc...) asparagine). Zn(2+) is bound at residue His609. Residue Glu610 is part of the active site. His613 provides a ligand contact to Zn(2+). Residue Asn653 is glycosylated (N-linked (GlcNAc...) asparagine). Position 671 (Glu671) interacts with Zn(2+). Asp675 acts as the Proton donor in catalysis.

The protein belongs to the peptidase M13 family. It depends on Zn(2+) as a cofactor. Post-translationally, N-glycosylated. In terms of processing, the soluble form is probably produced by proteolytic cleavage. Detected in the stellate cells in the main segment and the bar-shaped cells in the initial segment of male and female Malpighian tubules (at protein level). Expressed in the spermatheca (at protein level). Expressed in the somatic cyst cells of the testes, with increased expression at the tail end of elongating cysts. Expressed in the ovaries with strong expression in the posterior polar cells and in border cells of stage 8, 9, and 10 follicles. In adults and third-instar larvae, expressed in the brain, ventral ganglion, and stellate cells. Also expressed in the foregut and the imaginal disks (eye, antennal and leg) of third-instar larvae. In stage 17 embryos, expressed in the tracheal system, foregut, hindgut and epidermis. Also expressed in the stellate cell progenitors of the caudal visceral mesoderm in embryos.

The protein resides in the cell membrane. Its subcellular location is the secreted. The enzyme catalyses Preferential cleavage of polypeptides between hydrophobic residues, particularly with Phe or Tyr at P1'.. Metalloendoprotease which cleaves peptides such as tachykinin peptide TK-2 at the amino side of hydrophobic residues. Functions in female fertility, embryogenesis and memory formation. Required in females for normal patterns of egg laying, probably due to its function in sperm retention and preventing sperm displacement by rival ejaculates. Also required for normal patterns of hatching due to its important role in early embryonic development. Required in the dorsal paired medial neurons for the proper formation of middle-term memory. Also required in the mushroom body neurons where it functions redundantly with neprilysins Nep3 and Nep4 in normal long-term memory formation. In Drosophila melanogaster (Fruit fly), this protein is Neprilysin-2.